Reading from the N-terminus, the 198-residue chain is Carnitine operon protein CaiE (198 aa).

The tract at residues 179-198 is disordered; the sequence is VEENRPRLKGTTDVKPKSAQ. Basic and acidic residues predominate over residues 180–198; it reads EENRPRLKGTTDVKPKSAQ.

This sequence belongs to the transferase hexapeptide repeat family.

It participates in amine and polyamine metabolism; carnitine metabolism. Overproduction of CaiE stimulates the activity of CaiB and CaiD. This Salmonella choleraesuis (strain SC-B67) protein is Carnitine operon protein CaiE.